Reading from the N-terminus, the 280-residue chain is Urease accessory protein UreD 1 (280 aa).

Belongs to the UreD family. As to quaternary structure, ureD, UreF and UreG form a complex that acts as a GTP-hydrolysis-dependent molecular chaperone, activating the urease apoprotein by helping to assemble the nickel containing metallocenter of UreC. The UreE protein probably delivers the nickel.

The protein resides in the cytoplasm. Functionally, required for maturation of urease via the functional incorporation of the urease nickel metallocenter. In Brucella canis (strain ATCC 23365 / NCTC 10854 / RM-666), this protein is Urease accessory protein UreD 1.